The sequence spans 306 residues: MKSENNSVPIDHVIKVDNERHIRVWETFPKNQCDKRNNTIVIASGFARRMDHFAGLAEYLSTNGFHVIRYDSLNHVGLSSGEIDQFSMSVGKKSLLTVIDWLKSEHGIDQVGLIASSLSARIAYDIVADVNLSFLITAVGVVNLRNTLEQALKYDYLQMEIDEIPEDLDFDGYNLGSKVFVTDCFENNWDTLDSTINKTKNLNVPFIAFVANDDSWVQQHEVEELMSNINSDKTKIYSLIGSSHDLGENLIVLRNFYQSITKAAIALDSNLVGLVSEIIEPQFEALTIATVNERRLKNKIQSKSLA.

Catalysis depends on charge relay system residues Ser-117, Asp-214, and His-244.

Belongs to the LuxD family.

The protein operates within lipid metabolism; fatty acid reduction for biolumincescence. Acyl transferase is part of the fatty acid reductase system required for aldehyde biosynthesis; it produces fatty acids for the luminescent reaction. The polypeptide is Acyl transferase (Photobacterium phosphoreum).